The primary structure comprises 234 residues: Leucyl/phenylalanyl-tRNA--protein transferase (234 aa).

The protein belongs to the L/F-transferase family.

The protein resides in the cytoplasm. The enzyme catalyses N-terminal L-lysyl-[protein] + L-leucyl-tRNA(Leu) = N-terminal L-leucyl-L-lysyl-[protein] + tRNA(Leu) + H(+). It carries out the reaction N-terminal L-arginyl-[protein] + L-leucyl-tRNA(Leu) = N-terminal L-leucyl-L-arginyl-[protein] + tRNA(Leu) + H(+). The catalysed reaction is L-phenylalanyl-tRNA(Phe) + an N-terminal L-alpha-aminoacyl-[protein] = an N-terminal L-phenylalanyl-L-alpha-aminoacyl-[protein] + tRNA(Phe). In terms of biological role, functions in the N-end rule pathway of protein degradation where it conjugates Leu, Phe and, less efficiently, Met from aminoacyl-tRNAs to the N-termini of proteins containing an N-terminal arginine or lysine. The sequence is that of Leucyl/phenylalanyl-tRNA--protein transferase from Salmonella arizonae (strain ATCC BAA-731 / CDC346-86 / RSK2980).